Reading from the N-terminus, the 478-residue chain is UDP-N-acetylmuramate--L-alanine ligase (478 aa).

126–132 (GTHGKTT) contacts ATP.

This sequence belongs to the MurCDEF family.

Its subcellular location is the cytoplasm. The catalysed reaction is UDP-N-acetyl-alpha-D-muramate + L-alanine + ATP = UDP-N-acetyl-alpha-D-muramoyl-L-alanine + ADP + phosphate + H(+). It functions in the pathway cell wall biogenesis; peptidoglycan biosynthesis. Functionally, cell wall formation. This is UDP-N-acetylmuramate--L-alanine ligase from Synechococcus sp. (strain JA-2-3B'a(2-13)) (Cyanobacteria bacterium Yellowstone B-Prime).